A 734-amino-acid polypeptide reads, in one-letter code: Polyribonucleotide nucleotidyltransferase (734 aa).

Residues D505 and D511 each contribute to the Mg(2+) site. The KH domain maps to 572 to 631 (PKLTTIQIPVDAIGMVIGKGGETIRSITEETGAEINIEDDGTVTIASASGEGASAALETI). An S1 motif domain is found at 641 to 715 (GTVYSGKVRD…GKTRFALSIK (75 aa)).

Belongs to the polyribonucleotide nucleotidyltransferase family. It depends on Mg(2+) as a cofactor.

Its subcellular location is the cytoplasm. It carries out the reaction RNA(n+1) + phosphate = RNA(n) + a ribonucleoside 5'-diphosphate. Its function is as follows. Involved in mRNA degradation. Catalyzes the phosphorolysis of single-stranded polyribonucleotides processively in the 3'- to 5'-direction. This is Polyribonucleotide nucleotidyltransferase from Prosthecochloris aestuarii (strain DSM 271 / SK 413).